The following is a 51-amino-acid chain: Large ribosomal subunit protein eL39 (51 aa).

The tract at residues 1–23 is disordered; that stretch reads MPSQKSFRTKQKLAKAQKQNRPL.

The protein belongs to the eukaryotic ribosomal protein eL39 family. In terms of assembly, component of the large ribosomal subunit. Mature ribosomes consist of a small (40S) and a large (60S) subunit. The 40S subunit contains about 32 different proteins and 1 molecule of RNA (18S). The 60S subunit contains 45 different proteins and 3 molecules of RNA (25S, 5.8S and 5S).

The protein localises to the cytoplasm. Its function is as follows. Component of the ribosome, a large ribonucleoprotein complex responsible for the synthesis of proteins in the cell. The small ribosomal subunit (SSU) binds messenger RNAs (mRNAs) and translates the encoded message by selecting cognate aminoacyl-transfer RNA (tRNA) molecules. The large subunit (LSU) contains the ribosomal catalytic site termed the peptidyl transferase center (PTC), which catalyzes the formation of peptide bonds, thereby polymerizing the amino acids delivered by tRNAs into a polypeptide chain. The nascent polypeptides leave the ribosome through a tunnel in the LSU and interact with protein factors that function in enzymatic processing, targeting, and the membrane insertion of nascent chains at the exit of the ribosomal tunnel. The sequence is that of Large ribosomal subunit protein eL39 from Candida albicans (strain SC5314 / ATCC MYA-2876) (Yeast).